A 304-amino-acid polypeptide reads, in one-letter code: Polyisoprenyl-teichoic acid--peptidoglycan teichoic acid transferase TagU (304 aa).

The Cytoplasmic portion of the chain corresponds to 1-3 (MKK). The chain crosses the membrane as a helical; Signal-anchor for type II membrane protein span at residues 4 to 24 (ALIAIGLILGTITVAIIGYGI). The Extracellular segment spans residues 25 to 304 (YLYSSIQNTA…GELKSHLELS (280 aa)).

This sequence belongs to the LytR/CpsA/Psr (LCP) family.

The protein localises to the cell membrane. It participates in cell wall biogenesis. Its function is as follows. May catalyze the final step in cell wall teichoic acid biosynthesis, the transfer of the anionic cell wall polymers (APs) from their lipid-linked precursor to the cell wall peptidoglycan (PG). This chain is Polyisoprenyl-teichoic acid--peptidoglycan teichoic acid transferase TagU, found in Halalkalibacterium halodurans (strain ATCC BAA-125 / DSM 18197 / FERM 7344 / JCM 9153 / C-125) (Bacillus halodurans).